We begin with the raw amino-acid sequence, 395 residues long: Phosphoglycerate kinase (395 aa).

Residues 21–23 (DFN), arginine 36, 59–62 (HLGR), arginine 120, and arginine 153 each bind substrate. ATP is bound by residues lysine 203, glutamate 325, and 351 to 354 (GGDS).

It belongs to the phosphoglycerate kinase family. Monomer.

Its subcellular location is the cytoplasm. The catalysed reaction is (2R)-3-phosphoglycerate + ATP = (2R)-3-phospho-glyceroyl phosphate + ADP. Its pathway is carbohydrate degradation; glycolysis; pyruvate from D-glyceraldehyde 3-phosphate: step 2/5. In Roseiflexus sp. (strain RS-1), this protein is Phosphoglycerate kinase.